Here is a 1342-residue protein sequence, read N- to C-terminus: WD repeat-containing protein 19 (1342 aa).

WD repeat units follow at residues 11–51, 52–92, 95–134, 137–175, 273–311, and 317–356; these read TWLG…RSEI, NLPG…TSQL, GMRD…KIPV, KHTK…IRQT, NHKD…DMYV, and EENK…LGDA. TPR repeat units lie at residues 736 to 769, 775 to 808, 840 to 873, 895 to 928, 951 to 984, and 1020 to 1053; these read AQDL…AKHL, PFIS…DNKE, RVLK…DKAA, PKIH…QSVI, LDGA…NEAF, and EKRY…EDNV.

In terms of assembly, component of the IFT complex A (IFT-A) complex. IFT-A complex is divided into a core subcomplex composed of IFT122:IFT140:WDR19 which is associated with TULP3 and a peripheral subcomplex composed of IFT43:WDR35:TTC21B. Interacts (via C-terminal region) with IFT122 (via C-terminal region). Interacts with BBS1. Interacts with TTC25. In terms of tissue distribution, some isoforms are tissue-specific. Highly expressed in the prostate. Lower expression in the cerebellum, pituitary gland, fetal lung, and pancreas. In normal prostate, expressed in both basal and luminal epithelial cells. No expression detected in fibromuscular stromal cells, endothelial cells, or infiltrating lymphocytes. Uniformed expression in prostate adenocarcinoma cells.

Its subcellular location is the cell projection. It localises to the cilium. The protein resides in the cytoplasm. It is found in the cytoskeleton. The protein localises to the cilium basal body. Its subcellular location is the photoreceptor outer segment. It localises to the flagellum. As component of the IFT complex A (IFT-A), a complex required for retrograde ciliary transport and entry into cilia of G protein-coupled receptors (GPCRs), it is involved in cilia function and/or assembly. Essential for functional IFT-A assembly and ciliary entry of GPCRs. Associates with the BBSome complex to mediate ciliary transport. The sequence is that of WD repeat-containing protein 19 from Homo sapiens (Human).